A 433-amino-acid polypeptide reads, in one-letter code: 3-phosphoshikimate 1-carboxyvinyltransferase (433 aa).

Lys-23, Ser-24, and Arg-28 together coordinate 3-phosphoshikimate. Lys-23 contributes to the phosphoenolpyruvate binding site. Phosphoenolpyruvate-binding residues include Gly-95 and Arg-123. Residues Ser-170, Ser-171, Gln-172, Ser-198, Asp-317, and Lys-344 each contribute to the 3-phosphoshikimate site. Gln-172 contributes to the phosphoenolpyruvate binding site. Catalysis depends on Asp-317, which acts as the Proton acceptor. Phosphoenolpyruvate contacts are provided by Arg-348, Arg-391, and Lys-416.

The protein belongs to the EPSP synthase family. Monomer.

It is found in the cytoplasm. It catalyses the reaction 3-phosphoshikimate + phosphoenolpyruvate = 5-O-(1-carboxyvinyl)-3-phosphoshikimate + phosphate. It participates in metabolic intermediate biosynthesis; chorismate biosynthesis; chorismate from D-erythrose 4-phosphate and phosphoenolpyruvate: step 6/7. Catalyzes the transfer of the enolpyruvyl moiety of phosphoenolpyruvate (PEP) to the 5-hydroxyl of shikimate-3-phosphate (S3P) to produce enolpyruvyl shikimate-3-phosphate and inorganic phosphate. In Neisseria gonorrhoeae (strain NCCP11945), this protein is 3-phosphoshikimate 1-carboxyvinyltransferase.